The primary structure comprises 215 residues: Ubiquitin-conjugating enzyme E2 S (215 aa).

In terms of domain architecture, UBC core spans 9 to 155; it reads DVIKRVVKEL…AKLFTSIHAS (147 aa). Cys93 serves as the catalytic Glycyl thioester intermediate. The tract at residues 159-215 is disordered; that stretch reads IDSNNNNENSTTTPTTTTTATTPSTNTASISSPVKKKTETTNSTTTKVQPKKSLKRL. A compositionally biased stretch (low complexity) spans 161 to 190; it reads SNNNNENSTTTPTTTTTATTPSTNTASISS.

The protein belongs to the ubiquitin-conjugating enzyme family.

It carries out the reaction S-ubiquitinyl-[E1 ubiquitin-activating enzyme]-L-cysteine + [E2 ubiquitin-conjugating enzyme]-L-cysteine = [E1 ubiquitin-activating enzyme]-L-cysteine + S-ubiquitinyl-[E2 ubiquitin-conjugating enzyme]-L-cysteine.. The protein operates within protein modification; protein ubiquitination. Catalyzes the covalent attachment of ubiquitin to other proteins. Acts as an essential factor of the anaphase promoting complex/cyclosome (APC/C), a cell cycle-regulated ubiquitin ligase that controls progression through mitosis. Acts by specifically elongating polyubiquitin chains initiated by the E2 enzyme ubch10 on APC/C substrates, enhancing the degradation of APC/C substrates by the proteasome and promoting mitotic exit. This is Ubiquitin-conjugating enzyme E2 S (ube2s) from Dictyostelium discoideum (Social amoeba).